Consider the following 1088-residue polypeptide: Leucine-rich repeat receptor-like protein kinase PEPR2 (1088 aa).

The N-terminal stretch at 1–26 (MRNLGLLEITLLCSLFVYFRIDSVSS) is a signal peptide. Residues 27–739 (LNSDGLALLS…QVKLSTWKIA (713 aa)) lie on the Extracellular side of the membrane. N-linked (GlcNAc...) asparagine glycans are attached at residues asparagine 55, asparagine 82, and asparagine 122. 26 LRR repeats span residues 75–99 (GNVV…IGEL), 100–122 (KSLV…TLGN), 123–146 (CTSL…IFGS), 147–170 (LQNL…SVGG), 172–194 (IELV…LLGN), 195–219 (CSKL…LYLL), 221–243 (NLGE…SSNC), 244–267 (KKLV…IGNC), 269–291 (SLHS…MGML), 292–315 (RKVS…LGNC), 316–339 (SSLE…LSKL), 341–363 (KLQS…IWKI), 365–387 (SLTQ…VTQL), 388–411 (KHLK…LGLN), 412–435 (RSLE…LCHG), 436–459 (QKLR…IRQC), 460–485 (KTLE…SLSL), 487–506 (YVNL…LGSC), 507–529 (KNLL…ELGN), 530–554 (LQSL…LSGC), 556–577 (RLLY…SFRS), 578–602 (WKSL…LAEL), 603–627 (DRLS…GLLK), 629–651 (LRYG…LGAL), 652–676 (INLE…SLKS), and 678–698 (NQVD…LLSN). Residues asparagine 149, asparagine 159, asparagine 183, asparagine 194, asparagine 209, asparagine 229, asparagine 266, asparagine 279, and asparagine 314 are each glycosylated (N-linked (GlcNAc...) asparagine). N-linked (GlcNAc...) asparagine glycosylation is found at asparagine 373 and asparagine 411. N-linked (GlcNAc...) asparagine glycans are attached at residues asparagine 537 and asparagine 568. Residues asparagine 658 and asparagine 698 are each glycosylated (N-linked (GlcNAc...) asparagine). Residues 740 to 760 (LIAAGSSLSVLALLFALFLVL) traverse the membrane as a helical segment. The Cytoplasmic portion of the chain corresponds to 761 to 1088 (CRCKRGTKTE…FVRSTSGSVH (328 aa)). Threonine 791 is subject to Phosphothreonine. The 287-residue stretch at 794–1080 (LDDKYIIGRG…KDLTDLESFV (287 aa)) folds into the Protein kinase domain. Residues 800 to 808 (IGRGAHGVV) and lysine 822 contribute to the ATP site. Phosphotyrosine is present on residues tyrosine 868 and tyrosine 908. Aspartate 921 (proton acceptor) is an active-site residue. Residues tyrosine 962 and tyrosine 969 each carry the phosphotyrosine modification.

Belongs to the protein kinase superfamily. Ser/Thr protein kinase family. Interacts with BAK1. Interacts with CLE14.

The protein resides in the cell membrane. It catalyses the reaction L-seryl-[protein] + ATP = O-phospho-L-seryl-[protein] + ADP + H(+). The enzyme catalyses L-threonyl-[protein] + ATP = O-phospho-L-threonyl-[protein] + ADP + H(+). In terms of biological role, acts as a receptor for PEP defense peptides. Unlike typical immune receptors, senses an endogenous elicitor that potentiates PAMP-inducible plant responses. The protein is Leucine-rich repeat receptor-like protein kinase PEPR2 (PEPR2) of Arabidopsis thaliana (Mouse-ear cress).